A 451-amino-acid polypeptide reads, in one-letter code: 2-succinylbenzoate--CoA ligase (451 aa).

The protein belongs to the ATP-dependent AMP-binding enzyme family. MenE subfamily.

It carries out the reaction 2-succinylbenzoate + ATP + CoA = 2-succinylbenzoyl-CoA + AMP + diphosphate. Its pathway is quinol/quinone metabolism; 1,4-dihydroxy-2-naphthoate biosynthesis; 1,4-dihydroxy-2-naphthoate from chorismate: step 5/7. It participates in quinol/quinone metabolism; menaquinone biosynthesis. Functionally, converts 2-succinylbenzoate (OSB) to 2-succinylbenzoyl-CoA (OSB-CoA). The chain is 2-succinylbenzoate--CoA ligase from Escherichia coli (strain K12).